Reading from the N-terminus, the 316-residue chain is MSQPNQIHNALYLAFQRLQWSGLRESVPLTLSENDLADLRGINEKISLSEVTDIYLPLSRLLNLNVGAKQQRGLALNEFLGHVPPKRPYIISIAGSVAVGKSTTARILQALLSHWPEHPKVDLITTDGFLYPLSELKRRGLLQRKGFPESYDMKALVEFISAIKAGEPNVSAPIYSHITYDRIQDEQQWIRQPDILIIEGLNVLQTGQDSPVDTQRPFVSDFVDFSIYVDANESLLKKWYIDRFLQFRTGAFSSENSYFHHYSKLGDEEATATASNIWDTINGPNLTLNILPTRERAHLILQKGPDHMMDQVLLRK.

95-102 (GSVAVGKS) lines the ATP pocket.

It belongs to the prokaryotic pantothenate kinase family.

The protein resides in the cytoplasm. It catalyses the reaction (R)-pantothenate + ATP = (R)-4'-phosphopantothenate + ADP + H(+). Its pathway is cofactor biosynthesis; coenzyme A biosynthesis; CoA from (R)-pantothenate: step 1/5. The chain is Pantothenate kinase from Shewanella pealeana (strain ATCC 700345 / ANG-SQ1).